Reading from the N-terminus, the 113-residue chain is Dolichyl-diphosphooligosaccharide--protein glycosyltransferase subunit dad-1 (113 aa).

Residues 1–32 (MAAQVVPVLSKLFDDYQKTTSSKLKIIDAYMT) are Cytoplasmic-facing. Residues 33–53 (YILFTGIFQFIYCLLVGTFPF) traverse the membrane as a helical segment. Over 54–55 (NS) the chain is Lumenal. The chain crosses the membrane as a helical span at residues 56 to 78 (FLSGFISTVTSFVLASCLRMQVN). Topologically, residues 79 to 92 (QENRSEFTAVSTER) are cytoplasmic. The helical transmembrane segment at 93–113 (AFADFIFANLILHLVVVNFLG) threads the bilayer.

It belongs to the DAD/OST2 family. As to quaternary structure, component of the oligosaccharyltransferase (OST) complex.

It is found in the endoplasmic reticulum membrane. Its pathway is protein modification; protein glycosylation. Its function is as follows. Subunit of the oligosaccharyl transferase (OST) complex that catalyzes the initial transfer of a defined glycan (Glc(3)Man(9)GlcNAc(2) in eukaryotes) from the lipid carrier dolichol-pyrophosphate to an asparagine residue within an Asn-X-Ser/Thr consensus motif in nascent polypeptide chains, the first step in protein N-glycosylation. N-glycosylation occurs cotranslationally and the complex associates with the Sec61 complex at the channel-forming translocon complex that mediates protein translocation across the endoplasmic reticulum (ER). All subunits are required for a maximal enzyme activity. Possesses cell death-inhibiting activity. Suppresses some programmed cell death in C.elegans. This is Dolichyl-diphosphooligosaccharide--protein glycosyltransferase subunit dad-1 from Caenorhabditis elegans.